The sequence spans 303 residues: Acetaldehyde dehydrogenase 1 (303 aa).

Cys-130 serves as the catalytic Acyl-thioester intermediate. NAD(+) is bound by residues 161–169 (SVGPGTRKN) and Asn-272.

It belongs to the acetaldehyde dehydrogenase family.

The enzyme catalyses acetaldehyde + NAD(+) + CoA = acetyl-CoA + NADH + H(+). The sequence is that of Acetaldehyde dehydrogenase 1 from Methylibium petroleiphilum (strain ATCC BAA-1232 / LMG 22953 / PM1).